The following is a 235-amino-acid chain: Endonuclease V (235 aa).

Residues Asp-45 and Asp-115 each contribute to the Mg(2+) site.

This sequence belongs to the endonuclease V family. Mg(2+) serves as cofactor.

The protein localises to the cytoplasm. It carries out the reaction Endonucleolytic cleavage at apurinic or apyrimidinic sites to products with a 5'-phosphate.. Its function is as follows. DNA repair enzyme involved in the repair of deaminated bases. Selectively cleaves double-stranded DNA at the second phosphodiester bond 3' to a deoxyinosine leaving behind the intact lesion on the nicked DNA. The chain is Endonuclease V from Bacillus thuringiensis subsp. konkukian (strain 97-27).